The following is a 580-amino-acid chain: Laccase-6 (580 aa).

The signal sequence occupies residues 1-22 (MSCSWMIPVFAILAFVASAAQA). Plastocyanin-like domains follow at residues 30-148 (NVAT…PRRA) and 158-317 (EEKT…YVDA). Asparagine 44 and asparagine 78 each carry an N-linked (GlcNAc...) asparagine glycan. Residues histidine 82, histidine 84, histidine 127, and histidine 129 each contribute to the Cu cation site. Asparagine 306, asparagine 335, asparagine 385, asparagine 397, and asparagine 462 each carry an N-linked (GlcNAc...) asparagine glycan. Residues 424-564 (DFPDQPPVAF…AMVFEVESGP (141 aa)) form the Plastocyanin-like 3 domain. Cu cation contacts are provided by histidine 480, histidine 483, histidine 485, histidine 543, cysteine 544, histidine 545, and histidine 549.

This sequence belongs to the multicopper oxidase family. The cofactor is Cu cation.

It is found in the secreted. Its subcellular location is the extracellular space. The protein localises to the apoplast. It catalyses the reaction 4 hydroquinone + O2 = 4 benzosemiquinone + 2 H2O. In terms of biological role, lignin degradation and detoxification of lignin-derived products. The chain is Laccase-6 (LAC6) from Oryza sativa subsp. japonica (Rice).